Reading from the N-terminus, the 207-residue chain is uncharacterized protein (207 aa).

Helical transmembrane passes span 28–48 (IAVLLPLIEAFLPFLPLIVFV), 59–79 (EGFILSWAGSTAGSILVFLIV), 112–132 (MFLLLCFPFTPSAAVNVVAGL), 140–160 (FILAAASGKLVMIFMISFIGY), and 165–185 (LITQPIRTVIAVLVITVLWYV).

The protein resides in the cell membrane. This is an uncharacterized protein from Bacillus subtilis (strain 168).